A 231-amino-acid chain; its full sequence is NADH-ubiquinone oxidoreductase chain 4 (231 aa).

7 helical membrane-spanning segments follow: residues 1–21 (PIAGSMILAAILLKLGGYGII), 34–54 (VFLPFIVLALWGAILANLTCL), 63–85 (IAYSSISHMGLVVAAIIIQTPWG), 89–111 (AMALMIAHGFTSSALFCLANTTY), 128–148 (MMPMATTWWLMANLMNIAIPP), 169–189 (TIIMLGLSMLITASYSLHMFL), and 211–231 (LLMTLHLIPLLMISFKPELVT).

Belongs to the complex I subunit 4 family.

It is found in the mitochondrion membrane. The catalysed reaction is a ubiquinone + NADH + 5 H(+)(in) = a ubiquinol + NAD(+) + 4 H(+)(out). Core subunit of the mitochondrial membrane respiratory chain NADH dehydrogenase (Complex I) that is believed to belong to the minimal assembly required for catalysis. Complex I functions in the transfer of electrons from NADH to the respiratory chain. The immediate electron acceptor for the enzyme is believed to be ubiquinone. The chain is NADH-ubiquinone oxidoreductase chain 4 (MT-ND4) from Sistrurus miliarius (Pigmy rattlesnake).